The primary structure comprises 258 residues: Imidazole glycerol phosphate synthase subunit HisF (258 aa).

Residues aspartate 11 and aspartate 130 contribute to the active site.

The protein belongs to the HisA/HisF family. Heterodimer of HisH and HisF.

The protein resides in the cytoplasm. It catalyses the reaction 5-[(5-phospho-1-deoxy-D-ribulos-1-ylimino)methylamino]-1-(5-phospho-beta-D-ribosyl)imidazole-4-carboxamide + L-glutamine = D-erythro-1-(imidazol-4-yl)glycerol 3-phosphate + 5-amino-1-(5-phospho-beta-D-ribosyl)imidazole-4-carboxamide + L-glutamate + H(+). It participates in amino-acid biosynthesis; L-histidine biosynthesis; L-histidine from 5-phospho-alpha-D-ribose 1-diphosphate: step 5/9. IGPS catalyzes the conversion of PRFAR and glutamine to IGP, AICAR and glutamate. The HisF subunit catalyzes the cyclization activity that produces IGP and AICAR from PRFAR using the ammonia provided by the HisH subunit. This is Imidazole glycerol phosphate synthase subunit HisF from Photorhabdus laumondii subsp. laumondii (strain DSM 15139 / CIP 105565 / TT01) (Photorhabdus luminescens subsp. laumondii).